The chain runs to 479 residues: Anaerobic nitric oxide reductase flavorubredoxin (479 aa).

The zinc metallo-hydrolase stretch occupies residues Leu30–Ile210. Fe cation-binding residues include His79, Glu81, Asp83, His147, Asp166, and His227. Residues Ile254–Ala393 form the Flavodoxin-like domain. FMN contacts are provided by residues Thr260 to Asn264 and Ala342 to Leu369. The Rubredoxin-like domain maps to Gly423–Leu474. Fe cation is bound by residues Cys428, Cys431, Cys461, and Cys464.

The protein in the N-terminal section; belongs to the zinc metallo-hydrolase group 3 family. As to quaternary structure, homotetramer. Fe cation serves as cofactor. Requires FMN as cofactor.

Its subcellular location is the cytoplasm. Its pathway is nitrogen metabolism; nitric oxide reduction. Anaerobic nitric oxide reductase; uses NADH to detoxify nitric oxide (NO), protecting several 4Fe-4S NO-sensitive enzymes. Has at least 2 reductase partners, only one of which (NorW, flavorubredoxin reductase) has been identified. NO probably binds to the di-iron center; electrons enter from the NorW at rubredoxin and are transferred sequentially to the FMN center and the di-iron center. Also able to function as an aerobic oxygen reductase. In Escherichia coli (strain UTI89 / UPEC), this protein is Anaerobic nitric oxide reductase flavorubredoxin.